Here is a 3259-residue protein sequence, read N- to C-terminus: Striated muscle-specific serine/threonine-protein kinase (3259 aa).

Positions Met-1–Gly-30 are disordered. Arg-33 bears the Omega-N-methylarginine mark. One can recognise an Ig-like 1 domain in the interval Pro-45 to Thr-126. At Ser-141 the chain carries Phosphoserine. Disordered regions lie at residues Arg-155–Glu-185, Glu-198–His-226, Pro-278–Tyr-716, and Val-816–Leu-880. Positions Ser-158–Glu-185 are enriched in polar residues. Pro residues predominate over residues Pro-301–Pro-317. 2 positions are modified to phosphoserine: Ser-368 and Ser-375. Position 379 is a phosphothreonine (Thr-379). Phosphoserine occurs at positions 382 and 385. Basic and acidic residues predominate over residues Ile-404 to Asp-422. Ser-423 carries the phosphoserine modification. A Phosphothreonine modification is found at Thr-453. Ser-457, Ser-463, Ser-493, Ser-511, Ser-531, and Ser-554 each carry phosphoserine. Positions Glu-459 to Arg-473 are enriched in basic and acidic residues. Residues Thr-510–Leu-522 show a composition bias toward basic and acidic residues. Composition is skewed to basic and acidic residues over residues Pro-624–Pro-638 and Glu-663–Glu-680. The Ig-like 2 domain maps to Pro-727–Arg-817. Over residues Ala-820 to Thr-830 the composition is skewed to polar residues. Ig-like domains lie at Pro-874 to Glu-963, Pro-968 to Thr-1056, and Pro-1069 to Tyr-1157. Cys-994 and Cys-1046 are joined by a disulfide. Phosphoserine is present on residues Ser-1133 and Ser-1177. Residues Arg-1162–Gly-1185 form a disordered region. The region spanning Pro-1193–Thr-1283 is the Ig-like 6 domain. The Fibronectin type-III 1 domain maps to Pro-1290–His-1387. Over residues Ser-1367–Ser-1379 the composition is skewed to low complexity. The tract at residues Ser-1367–Glu-1386 is disordered. Residues Pro-1490–Ser-1578 enclose the Ig-like 7 domain. One can recognise a Protein kinase 1 domain in the interval Tyr-1606–Phe-1859. ATP is bound by residues Ile-1612–Leu-1620 and Lys-1635. Asp-1724 serves as the catalytic Proton acceptor. Disordered stretches follow at residues Met-1913–Ala-2244, Ala-2336–Leu-2451, and Arg-2463–Asn-2562. Residues Pro-1918–Ser-1927 show a composition bias toward low complexity. Residues Ser-1993, Ser-2004, Ser-2019, Ser-2020, and Ser-2042 each carry the phosphoserine modification. Basic and acidic residues predominate over residues Ser-2009 to Ser-2019. The residue at position 2060 (Arg-2060) is an Asymmetric dimethylarginine; alternate. Arg-2060 carries the post-translational modification Omega-N-methylarginine; alternate. A compositionally biased stretch (low complexity) spans Ala-2069 to Arg-2081. Residues Ser-2114 and Ser-2135 each carry the phosphoserine modification. Omega-N-methylarginine is present on Arg-2144. Residues Glu-2168–Gln-2179 show a composition bias toward polar residues. The span at Pro-2180–Pro-2189 shows a compositional bias: pro residues. Residues Ser-2182 and Ser-2207 each carry the phosphoserine modification. Polar residues predominate over residues Ile-2193–Ser-2207. The span at Pro-2208–Glu-2218 shows a compositional bias: pro residues. Positions Lys-2219–Arg-2229 are enriched in basic and acidic residues. A compositionally biased stretch (low complexity) spans Ala-2230–Ala-2244. Residues Ala-2336 to Pro-2345 are compositionally biased toward basic and acidic residues. The span at Leu-2346 to Arg-2355 shows a compositional bias: low complexity. Positions Ser-2356–Ile-2372 are enriched in basic and acidic residues. Ser-2376 carries the post-translational modification Phosphoserine. A Phosphothreonine modification is found at Thr-2380. Residues Leu-2384–Gln-2395 are compositionally biased toward basic and acidic residues. A phosphoserine mark is found at Ser-2410, Ser-2414, Ser-2438, Ser-2439, Ser-2444, and Ser-2448. A compositionally biased stretch (low complexity) spans Arg-2463–Ser-2484. Positions Gln-2510–Pro-2520 are enriched in polar residues. A phosphoserine mark is found at Ser-2521 and Ser-2524. The segment covering Ser-2521–Glu-2540 has biased composition (low complexity). A compositionally biased stretch (basic residues) spans Ser-2543 to Lys-2554. Residue Ser-2559 is modified to Phosphoserine. The Ig-like 8 domain occupies Pro-2583–Ala-2673. Cys-2605 and Cys-2657 form a disulfide bridge. Positions Lys-2680 to Ser-2774 constitute a Fibronectin type-III 2 domain. Thr-2771 bears the Phosphothreonine mark. Disordered stretches follow at residues Thr-2771–Asn-2829 and Thr-2855–Pro-2957. Ser-2774 is subject to Phosphoserine. The span at Arg-2793–Ala-2810 shows a compositional bias: pro residues. A compositionally biased stretch (low complexity) spans Ser-2814–Ala-2828. The Fibronectin type-III 3 domain occupies Glu-2859–Ala-2965. The span at Gly-2880–Val-2907 shows a compositional bias: polar residues. Pro residues predominate over residues Pro-2910 to Pro-2924. Over residues Ser-2940–Arg-2950 the composition is skewed to polar residues. The residue at position 2941 (Ser-2941) is a Phosphoserine. One can recognise a Protein kinase 2 domain in the interval Tyr-2958 to Leu-3210. Residues Lys-2964 to Val-2972 and Lys-2987 each bind ATP. Asp-3077 (proton acceptor) is an active-site residue.

This sequence belongs to the protein kinase superfamily. CAMK Ser/Thr protein kinase family. Interacts with MTM1. May be autophosphorylated. In terms of tissue distribution, isoform 2 is highly expressed in differentiated arterial smooth muscle cells (ASMC) in the medial layer of the aorta. Weakly detected in brain and testis and to a lesser extent in organs rich in striated muscle or visceral smooth muscle.

Its subcellular location is the nucleus. It catalyses the reaction L-seryl-[protein] + ATP = O-phospho-L-seryl-[protein] + ADP + H(+). It carries out the reaction L-threonyl-[protein] + ATP = O-phospho-L-threonyl-[protein] + ADP + H(+). Functionally, isoform 2 may have a role in regulating the growth and differentiation of arterial smooth muscle cells. This is Striated muscle-specific serine/threonine-protein kinase (Speg) from Rattus norvegicus (Rat).